We begin with the raw amino-acid sequence, 521 residues long: GMP synthase [glutamine-hydrolyzing] (521 aa).

In terms of domain architecture, Glutamine amidotransferase type-1 spans 9–203 (KILILDFGSQ…VSDICQCKKN (195 aa)). Residue Cys-86 is the Nucleophile of the active site. Catalysis depends on residues His-177 and Glu-179. One can recognise a GMPS ATP-PPase domain in the interval 204–396 (WTTDNIITKL…LGLPTHMLNC (193 aa)). Residue 231–237 (SGGVDSS) participates in ATP binding.

As to quaternary structure, homodimer.

It catalyses the reaction XMP + L-glutamine + ATP + H2O = GMP + L-glutamate + AMP + diphosphate + 2 H(+). It participates in purine metabolism; GMP biosynthesis; GMP from XMP (L-Gln route): step 1/1. Functionally, catalyzes the synthesis of GMP from XMP. The polypeptide is GMP synthase [glutamine-hydrolyzing] (Vesicomyosocius okutanii subsp. Calyptogena okutanii (strain HA)).